Reading from the N-terminus, the 308-residue chain is Ribosomal RNA small subunit methyltransferase H (308 aa).

Residues 36–38, Asp55, Phe82, Asp103, and Gln110 contribute to the S-adenosyl-L-methionine site; that span reads GGH.

The protein belongs to the methyltransferase superfamily. RsmH family.

The protein localises to the cytoplasm. It catalyses the reaction cytidine(1402) in 16S rRNA + S-adenosyl-L-methionine = N(4)-methylcytidine(1402) in 16S rRNA + S-adenosyl-L-homocysteine + H(+). Its function is as follows. Specifically methylates the N4 position of cytidine in position 1402 (C1402) of 16S rRNA. The polypeptide is Ribosomal RNA small subunit methyltransferase H (Helicobacter pylori (strain J99 / ATCC 700824) (Campylobacter pylori J99)).